Here is a 151-residue protein sequence, read N- to C-terminus: Ribonuclease H (151 aa).

Residues 1 to 143 (MEEYVIYTDG…VDRVARKEAA (143 aa)) enclose the RNase H type-1 domain. Asp9, Glu48, Asp71, and Asp135 together coordinate Mg(2+).

The protein belongs to the RNase H family. Monomer. The cofactor is Mg(2+).

It is found in the cytoplasm. The enzyme catalyses Endonucleolytic cleavage to 5'-phosphomonoester.. Functionally, endonuclease that specifically degrades the RNA of RNA-DNA hybrids. This Neorickettsia sennetsu (strain ATCC VR-367 / Miyayama) (Ehrlichia sennetsu) protein is Ribonuclease H.